Reading from the N-terminus, the 520-residue chain is Beta-glucosidase 45 (520 aa).

The first 22 residues, 1 to 22 (MKNLTSFVIVILLQSLLFHVYG), serve as a signal peptide directing secretion. Asn3 carries N-linked (GlcNAc...) asparagine glycosylation. A beta-D-glucoside-binding positions include Gln52, His155, and 200-201 (NE). Glu201 (proton donor) is an active-site residue. Cys220 and Cys227 form a disulfide bridge. N-linked (GlcNAc...) asparagine glycosylation occurs at Asn226. Tyr344 contributes to the a beta-D-glucoside binding site. Cys352 and Cys357 are oxidised to a cystine. Asn378 carries an N-linked (GlcNAc...) asparagine glycan. Glu417 is an a beta-D-glucoside binding site. The active-site Nucleophile is Glu417. Residue Asn435 is glycosylated (N-linked (GlcNAc...) asparagine). Residues Trp466, 473 to 474 (EW), and Phe482 each bind a beta-D-glucoside.

It belongs to the glycosyl hydrolase 1 family. Expressed in stems and siliques.

The catalysed reaction is Hydrolysis of terminal, non-reducing beta-D-glucosyl residues with release of beta-D-glucose.. Its function is as follows. Hydrolyzes p-nitrophenyl beta-D-glucoside and natural glucosides such as syringin, coniferin and p-coumaryl alcohol glucoside. May be involved in lignification by hydrolyzing monolignol glucosides. This Arabidopsis thaliana (Mouse-ear cress) protein is Beta-glucosidase 45.